We begin with the raw amino-acid sequence, 93 residues long: Small ribosomal subunit protein bS16 (93 aa).

It belongs to the bacterial ribosomal protein bS16 family.

This is Small ribosomal subunit protein bS16 from Dictyoglomus turgidum (strain DSM 6724 / Z-1310).